A 290-amino-acid polypeptide reads, in one-letter code: 4-diphosphocytidyl-2-C-methyl-D-erythritol kinase (290 aa).

Lysine 8 is an active-site residue. 92–102 (PISAGLAGGST) serves as a coordination point for ATP. Residue aspartate 134 is part of the active site.

Belongs to the GHMP kinase family. IspE subfamily.

It catalyses the reaction 4-CDP-2-C-methyl-D-erythritol + ATP = 4-CDP-2-C-methyl-D-erythritol 2-phosphate + ADP + H(+). Its pathway is isoprenoid biosynthesis; isopentenyl diphosphate biosynthesis via DXP pathway; isopentenyl diphosphate from 1-deoxy-D-xylulose 5-phosphate: step 3/6. Functionally, catalyzes the phosphorylation of the position 2 hydroxy group of 4-diphosphocytidyl-2C-methyl-D-erythritol. The protein is 4-diphosphocytidyl-2-C-methyl-D-erythritol kinase of Caldicellulosiruptor saccharolyticus (strain ATCC 43494 / DSM 8903 / Tp8T 6331).